The chain runs to 95 residues: MVSQLVTYSAHVILFVLVWLLAYTDVVPVLSYLPECLHCLVNYAPFFAVLFLGIYAVFNVVYGVATFNDCAEAKVELLGEIKEAREELKRKRIID.

Transmembrane regions (helical) follow at residues 10–30 and 44–64; these read AHVILFVLVWLLAYTDVVPVL and APFFAVLFLGIYAVFNVVYGV.

The protein belongs to the DPM3 family.

It is found in the endoplasmic reticulum membrane. The protein operates within protein modification; protein glycosylation. Stabilizer subunit of the dolichol-phosphate-mannose synthase complex. In Caenorhabditis elegans, this protein is Probable dolichol-phosphate mannosyltransferase subunit 3 (dpm-3).